Reading from the N-terminus, the 218-residue chain is Adenylate kinase (218 aa).

ATP is bound at residue 10 to 15 (GAGKGT). Positions 30 to 59 (STGDMLRAAVKAGTPLGIAAKKIMDEGGLV) are NMP. AMP is bound by residues threonine 31, arginine 36, 57–59 (GLV), 85–88 (GFPR), and glutamine 92. Residues 122–159 (GRRVHPASGRTYHVKFNPPKVAGKDDLTGEELIQRDDD) are LID. Residues arginine 123 and 132-133 (TY) each bind ATP. AMP is bound by residues arginine 156 and arginine 167. Glycine 203 provides a ligand contact to ATP.

It belongs to the adenylate kinase family. Monomer.

The protein localises to the cytoplasm. It catalyses the reaction AMP + ATP = 2 ADP. The protein operates within purine metabolism; AMP biosynthesis via salvage pathway; AMP from ADP: step 1/1. Its function is as follows. Catalyzes the reversible transfer of the terminal phosphate group between ATP and AMP. Plays an important role in cellular energy homeostasis and in adenine nucleotide metabolism. The chain is Adenylate kinase from Janthinobacterium sp. (strain Marseille) (Minibacterium massiliensis).